The sequence spans 367 residues: C-glycoside deglycosidase alpha subunit (367 aa).

E146 contacts Mg(2+). H148 serves as the catalytic Proton acceptor. 3 residues coordinate Mg(2+): D178, H276, and E312.

It belongs to the C-glycoside deglycosidase alpha subunit family. Heterodimer composed of an alpha subunit (CarB1) and a beta subunit (CarC1). It depends on Mg(2+) as a cofactor.

It carries out the reaction 3''-dehydroisovitexin = 1,5-anhydro-D-erythro-hex-1-en-3-ulose + apigenin. Its activity is regulated as follows. Activity is strongly reduced in the presence of chelating agents. In terms of biological role, carbon-carbon bond-cleaving enzyme which participates in the metabolism of C-glycosides. Acts on the C6-glycosylated compound 3''-dehydroisovitexin (3''-oxo-isovitexin). Shows weak activity with 3''-dehydroisoorientin (3''-oxo-homoorientin) and 3'-dehydromangiferin (3'-oxo-mangiferin). This chain is C-glycoside deglycosidase alpha subunit, found in Arthrobacter globiformis (strain ATCC 8010 / DSM 20124 / JCM 1332 / NBRC 12137 / NCIMB 8907 / NRRL B-2979 / 168).